Reading from the N-terminus, the 311-residue chain is Endosome-associated-trafficking regulator 1 (311 aa).

The stretch at 167–278 (RGNAENGTKN…KSENERLRLG (112 aa)) forms a coiled coil.

It belongs to the ENTR1 family.

The protein resides in the cytoplasm. It localises to the early endosome. Its subcellular location is the endosome. It is found in the recycling endosome. The protein localises to the midbody. The protein resides in the cytoskeleton. It localises to the microtubule organizing center. Its subcellular location is the centrosome. It is found in the cilium basal body. Its function is as follows. Endosome-associated protein that plays a role in membrane receptor sorting, cytokinesis and ciliogenesis. The sequence is that of Endosome-associated-trafficking regulator 1 from Danio rerio (Zebrafish).